The chain runs to 238 residues: tRNA (guanine-N(1)-)-methyltransferase (238 aa).

132–137 (IGDYVL) is an S-adenosyl-L-methionine binding site.

Belongs to the RNA methyltransferase TrmD family. As to quaternary structure, homodimer.

The protein resides in the cytoplasm. The enzyme catalyses guanosine(37) in tRNA + S-adenosyl-L-methionine = N(1)-methylguanosine(37) in tRNA + S-adenosyl-L-homocysteine + H(+). Specifically methylates guanosine-37 in various tRNAs. This Nitrobacter hamburgensis (strain DSM 10229 / NCIMB 13809 / X14) protein is tRNA (guanine-N(1)-)-methyltransferase.